The sequence spans 952 residues: Bromodomain testis-specific protein (952 aa).

A Bromo 1 domain is found at 26 to 132; that stretch reads RLTNQLQFLQ…KLFMQKLSQM (107 aa). The segment covering 141–150 has biased composition (basic and acidic residues); that stretch reads GKERMKKDIQ. The tract at residues 141-168 is disordered; it reads GKERMKKDIQQKTAVSSAKEQTPSKSAE. The segment covering 151–167 has biased composition (polar residues); it reads QKTAVSSAKEQTPSKSA. Serine 186 is modified (phosphoserine). The Nuclear localization signal motif lies at 208–219; it reads KGVKRRADTTTP. Residues 209–257 form a disordered region; sequence GVKRRADTTTPTTSSAKASSESPPPLREAKPANAPVKENTVKSVLPDSQ. Over residues 216–229 the composition is skewed to low complexity; sequence TTTPTTSSAKASSE. In terms of domain architecture, Bromo 2 spans 266-375; the sequence is VKVTEQLKHC…DVFEMHFAKI (110 aa). Disordered stretches follow at residues 392–420, 442–504, 607–746, and 850–930; these read SAKA…ERVQ, VPLR…NAKP, QLNC…GCQV, and KHLE…RREA. Positions 417-442 form a coiled coil; that stretch reads ERVQRLAKLQEQLNAVHQQLQVLSQV. A compositionally biased stretch (basic residues) spans 445–463; sequence RKLKKKNEKSKRAPKRKKV. In terms of domain architecture, NET spans 495-577; sequence KLEEEDNAKP…ACLRKRSLKP (83 aa). Positions 610 to 619 are enriched in basic residues; that stretch reads CRKRQTKRPA. The span at 625-638 shows a compositional bias: pro residues; that stretch reads PRPPLPPPPPPPPE. Positions 646-681 are enriched in low complexity; that stretch reads SDSSSSSSSSGSGSSSSSSSSSGSGSSSSDSSSSDS. The segment covering 718–729 has biased composition (polar residues); that stretch reads SAETALVQQSTG. Residues 837–936 adopt a coiled-coil conformation; that stretch reads EKEVKARTQE…RREAMAGTID (100 aa). Basic and acidic residues predominate over residues 850-867; sequence KHLEHSAKDPKVSQESQR. The segment covering 874–883 has biased composition (polar residues); sequence TPESSSNKVQ. Residues 893–902 show a composition bias toward low complexity; the sequence is EQQQLPSPSE. A compositionally biased stretch (basic and acidic residues) spans 911 to 930; it reads LLKDRNLAREKEQERRRREA.

The protein belongs to the BET family. Interacts with the acetylated N-terminus of histone H1, H2, H3 and H4. Interacts with P-TEFb components CDK9 and CCNT1/cyclin-T1. Interacts with mRNA splicing machinery proteins SRSF2, DDX5, HNRNPK and TARDBP. Interacts with SMARCE1. In terms of processing, ubiquitinated in a SPOP-dependent manner, leading to proteasomal degradation.

It localises to the nucleus. Functionally, testis-specific chromatin protein that specifically binds histone H4 acetylated at 'Lys-5' and 'Lys-8' (H4K5ac and H4K8ac, respectively) and plays a key role in spermatogenesis. Required in late pachytene spermatocytes: plays a role in meiotic and post-meiotic cells by binding to acetylated histones at the promoter of specific meiotic and post-meiotic genes, facilitating their activation at the appropriate time. In the post-meiotic phase of spermatogenesis, binds to hyperacetylated histones and participates in their general removal from DNA. Also recognizes and binds a subset of butyrylated histones: able to bind histone H4 butyrylated at 'Lys-8' (H4K8ac), while it is not able to bind H4 butyrylated at 'Lys-5' (H4K5ac). Also acts as a component of the splicing machinery in pachytene spermatocytes and round spermatids and participates in 3'-UTR truncation of specific mRNAs in post-meiotic spermatids. Required for chromocenter organization, a structure comprised of peri-centromeric heterochromatin. In Rattus norvegicus (Rat), this protein is Bromodomain testis-specific protein (Brdt).